Consider the following 217-residue polypeptide: Somatotropin (217 aa).

An N-terminal signal peptide occupies residues 1-24 (MAAGSWTSLLLAFTLLCLPQLREA). His-44 is a Zn(2+) binding site. Cys-79 and Cys-191 are oxidised to a cystine. Ser-132 is modified (phosphoserine). Glu-200 provides a ligand contact to Zn(2+). Cys-208 and Cys-215 are disulfide-bonded.

It belongs to the somatotropin/prolactin family.

Its subcellular location is the secreted. In terms of biological role, plays an important role in growth control. Its major role in stimulating body growth is to stimulate the liver and other tissues to secrete IGF1. It stimulates both the differentiation and proliferation of myoblasts. It also stimulates amino acid uptake and protein synthesis in muscle and other tissues. The protein is Somatotropin (GH1) of Callithrix jacchus (White-tufted-ear marmoset).